The following is a 123-amino-acid chain: Small ribosomal subunit protein uS12c (123 aa).

It belongs to the universal ribosomal protein uS12 family. Part of the 30S ribosomal subunit.

The protein resides in the plastid. It is found in the chloroplast. Functionally, with S4 and S5 plays an important role in translational accuracy. Located at the interface of the 30S and 50S subunits. This is Small ribosomal subunit protein uS12c (rps12) from Chlorella vulgaris (Green alga).